A 207-amino-acid polypeptide reads, in one-letter code: Ribonuclease HII (207 aa).

The 207-residue stretch at M1–Q207 folds into the RNase H type-2 domain. Residues D7, E8, and D105 each contribute to the a divalent metal cation site.

It belongs to the RNase HII family. It depends on Mn(2+) as a cofactor. Mg(2+) is required as a cofactor.

It is found in the cytoplasm. It carries out the reaction Endonucleolytic cleavage to 5'-phosphomonoester.. Functionally, endonuclease that specifically degrades the RNA of RNA-DNA hybrids. This is Ribonuclease HII from Methanobrevibacter smithii (strain ATCC 35061 / DSM 861 / OCM 144 / PS).